Here is a 210-residue protein sequence, read N- to C-terminus: Urease accessory protein UreG (210 aa).

GTP is bound at residue 14–21 (GPVGSGKT).

This sequence belongs to the SIMIBI class G3E GTPase family. UreG subfamily. Homodimer. UreD, UreF and UreG form a complex that acts as a GTP-hydrolysis-dependent molecular chaperone, activating the urease apoprotein by helping to assemble the nickel containing metallocenter of UreC. The UreE protein probably delivers the nickel.

Its subcellular location is the cytoplasm. Functionally, facilitates the functional incorporation of the urease nickel metallocenter. This process requires GTP hydrolysis, probably effectuated by UreG. The sequence is that of Urease accessory protein UreG from Rhodopseudomonas palustris (strain BisB5).